Here is a 1286-residue protein sequence, read N- to C-terminus: Lysine-specific demethylase JMJ705 (1286 aa).

A JmjN domain is found at 25 to 66 (APEFRPTAAEFADPVSYILKIEPAAAPYGICKVVPPLPPPPK). Residues 82-105 (PDDRSPSFPTRHQQVGLCPRRTRP) are disordered. Residues 201–367 (ETAWNMRGVA…IAKEAAIRRA (167 aa)) form the JmjC domain. Fe cation is bound by residues histidine 244, glutamate 246, and histidine 335. Residues 641-679 (PNSSNNVGCVGTKLSSSSTERQERPSSQNAHCNGSSVIS) show a composition bias toward polar residues. Disordered stretches follow at residues 641–686 (PNSS…KGVR), 1013–1060 (AEPV…HSQE), and 1077–1164 (PAGT…PKQA). Polar residues predominate over residues 1119 to 1136 (HASGQKSNVQEANANSAS). The segment at 1167-1189 (YSCDIEGCSMSFRTKRDLSLHKS) adopts a C2H2-type 1; degenerate zinc-finger fold. 3 C2H2-type zinc fingers span residues 1190 to 1214 (DICP…RKVH), 1220 to 1244 (LTCP…LRVH), and 1250 to 1276 (YVCH…KTGH).

The cofactor is Fe(2+). In terms of tissue distribution, expressed in leaves and flag leaves. Expressed at low levels in roots, shoots, stems and panicles.

Its subcellular location is the nucleus. The catalysed reaction is N(6),N(6),N(6)-trimethyl-L-lysyl(27)-[histone H3] + 2 2-oxoglutarate + 2 O2 = N(6)-methyl-L-lysyl(27)-[histone H3] + 2 formaldehyde + 2 succinate + 2 CO2. Histone demethylase that demethylates 'Lys-27' (H3K27me) of histone H3 with a specific activity for H3K27me3 and H3K27me2. No activity on H3K4me3, H3K9me3, H3K27me1 and H3K36me3. Involved in biotic stress response. May demethylate H3K27me3-marked defense-related genes and increase their basal and induced expression levels during pathogen infection. This chain is Lysine-specific demethylase JMJ705 (JMJ705), found in Oryza sativa subsp. japonica (Rice).